The chain runs to 166 residues: Ribonuclease H2 subunit C (166 aa).

The residue at position 1 (Met-1) is an N-acetylmethionine.

Belongs to the RNase H2 subunit C family. In terms of assembly, the RNase H2 complex is a heterotrimer composed of the catalytic subunit RNASEH2A and the non-catalytic subunits RNASEH2B and RNASEH2C.

Its subcellular location is the nucleus. Functionally, non catalytic subunit of RNase H2, an endonuclease that specifically degrades the RNA of RNA:DNA hybrids. Participates in DNA replication, possibly by mediating the removal of lagging-strand Okazaki fragment RNA primers during DNA replication. Mediates the excision of single ribonucleotides from DNA:RNA duplexes. The polypeptide is Ribonuclease H2 subunit C (Rnaseh2c) (Mus musculus (Mouse)).